Here is a 161-residue protein sequence, read N- to C-terminus: Cuticle protein 16.8 (161 aa).

Position 1 is a pyrrolidone carboxylic acid (glutamine 1). The span at 1-10 (QSEPAGPPQP) shows a compositional bias: pro residues. Disordered stretches follow at residues 1-44 (QSEP…YSYT) and 67-103 (ETNE…PAKP). Residues 8–74 (PQPYTFSYDN…TVETNEPGTK (67 aa)) enclose the Chitin-binding type R&amp;R domain. Polar residues predominate over residues 67 to 86 (ETNEPGTKTSNPADAQIVSN). Low complexity predominate over residues 87-103 (AATDSYSPSPASSPAKP).

Functionally, component of the cuticle of the tick. Binds chitin. In Ixodes ricinus (Common tick), this protein is Cuticle protein 16.8.